Reading from the N-terminus, the 320-residue chain is L-lactate dehydrogenase 2 (320 aa).

Residues 18–19 (AV), Asp40, and Arg45 each bind NAD(+). Substrate is bound by residues Gln88, Arg94, and 126–129 (NPVD). NAD(+)-binding positions include 124–126 (ITN) and Ser149. 154-157 (DSAR) lines the substrate pocket. Beta-D-fructose 1,6-bisphosphate is bound by residues Arg159 and 171–176 (KNVHAY). Residue His181 is the Proton acceptor of the active site. At Tyr228 the chain carries Phosphotyrosine. Substrate is bound at residue Thr237.

This sequence belongs to the LDH/MDH superfamily. LDH family. As to quaternary structure, homotetramer.

Its subcellular location is the cytoplasm. The catalysed reaction is (S)-lactate + NAD(+) = pyruvate + NADH + H(+). Its pathway is fermentation; pyruvate fermentation to lactate; (S)-lactate from pyruvate: step 1/1. Its activity is regulated as follows. Allosterically activated by fructose 1,6-bisphosphate (FBP). In terms of biological role, catalyzes the conversion of lactate to pyruvate. The polypeptide is L-lactate dehydrogenase 2 (Bifidobacterium longum subsp. longum (strain ATCC 15707 / DSM 20219 / JCM 1217 / NCTC 11818 / E194b)).